Consider the following 108-residue polypeptide: MMIKKKAAFSEYRDLEQSYMQLNHCLKKFHQIRAKVSQQLAERAESPKNSRETESILHNLFPQGVAGVNQEAEKDLKKIVSLFKQLEVRLKQLNAQAPVEIPSGKTKR.

A coiled-coil region spans residues 69–97 (NQEAEKDLKKIVSLFKQLEVRLKQLNAQA).

Binds to SseB and SseD.

It localises to the cytoplasm. In terms of biological role, functions as a type III secretion system (T3SS) chaperone, which is required for SseB and SseD accumulation and secretion. May have a direct role in secretion of SseB and SseD, or may facilitate their correct folding, for efficient secretion and function. Required for survival and replication within epithelial cells and macrophages. The chain is Type III secretion system chaperone SseA (sseA) from Salmonella typhimurium (strain LT2 / SGSC1412 / ATCC 700720).